The chain runs to 320 residues: Probable carboxylesterase M8 (320 aa).

Residues 52 to 54 (HGG) carry the Involved in the stabilization of the negatively charged intermediate by the formation of the oxyanion hole motif. Active-site residues include Ser-137 and His-296.

This sequence belongs to the 'GDXG' lipolytic enzyme family.

It carries out the reaction a carboxylic ester + H2O = an alcohol + a carboxylate + H(+). Its pathway is secondary metabolite biosynthesis. Functionally, probable carboxylesterase; part of the gene cluster that mediates the biosynthesis of squalestatin S1 (SQS1, also known as zaragozic acid A), a heavily oxidized fungal polyketide that offers potent cholesterol lowering activity by targeting squalene synthase (SS). SQS1 is composed of a 2,8-dioxobicyclic[3.2.1]octane-3,4,5-tricarboxyclic acid core that is connected to two lipophilic polyketide arms. These initial steps feature the priming of an unusual benzoic acid starter unit onto the highly reducing polyketide synthase pks2, followed by oxaloacetate extension and product release to generate a tricarboxylic acid containing product. The phenylalanine ammonia lyase (PAL) M7 and the acyl-CoA ligase M9 are involved in transforming phenylalanine into benzoyl-CoA. The citrate synthase-like protein R3 is involved in connecting the C-alpha-carbons of the hexaketide chain and oxaloacetate to afford the tricarboxylic acid unit. The potential hydrolytic enzymes, M8 and M10, are in close proximity to pks2 and may participate in product release. On the other side, the tetraketide arm is synthesized by a the squalestatin tetraketide synthase pks1 and enzymatically esterified to the core in the last biosynthetic step, by the acetyltransferase M4. The biosynthesis of the tetraketide must involve 3 rounds of chain extension. After the first and second rounds methyl-transfer occurs, and in all rounds of extension the ketoreductase and dehydratase are active. The enoyl reductase and C-MeT of pks1 are not active in the final round of extension. The acetyltransferase M4 appears to have a broad substrate selectivity for its acyl CoA substrate, allowing the in vitro synthesis of novel squalestatins. The biosynthesis of SQS1 requires several oxidative steps likely performed by oxidoreductases M1, R1 and R2. Finally, in support of the identification of the cluster as being responsible for SQS1 production, the cluster contains a gene encoding a putative squalene synthase (SS) R6, suggesting a likely mechanism for self-resistance. In Phoma sp. (strain ATCC 20986 / MF5453), this protein is Probable carboxylesterase M8.